We begin with the raw amino-acid sequence, 376 residues long: Putative endoglucanase type K (376 aa).

An N-terminal signal peptide occupies residues 1-18; the sequence is MRSYTLLALAGPLAVSAA. The segment at 19-308 is catalytic; sequence SGSGHSTRYW…ATKPAQPVNK (290 aa). The active-site Nucleophile is Asp-29. Asp-140 (proton donor) is an active-site residue. The interval 229-332 is disordered; it reads AFKGDTSASK…SCPAKTDATA (104 aa). 2 stretches are compositionally biased toward low complexity: residues 235 to 258 and 291 to 306; these read SASKPQPSSSAKKTTSAAAAAQPQ and KPVATKPAATKPAQPV. The interval 309-338 is linker; that stretch reads PKTTQKVRGTKTRGSCPAKTDATAKASVVP. Positions 335-374 constitute a CBM1 domain; the sequence is SVVPAYYQCGGSKSAYPNGNLACATGSKCVKQNEYYSQCV.

The protein belongs to the glycosyl hydrolase 45 (cellulase K) family.

It catalyses the reaction Endohydrolysis of (1-&gt;4)-beta-D-glucosidic linkages in cellulose, lichenin and cereal beta-D-glucans.. The chain is Putative endoglucanase type K from Fusarium oxysporum (Fusarium vascular wilt).